A 457-amino-acid chain; its full sequence is Hydrogenobyrinate a,c-diamide synthase (457 aa).

Positions 255-441 (TVAIAAGRAF…LHTHPAATPG (187 aa)) constitute a GATase cobBQ-type domain. Cys-337 (nucleophile) is an active-site residue.

Belongs to the CobB/CbiA family. It depends on Mg(2+) as a cofactor.

The catalysed reaction is hydrogenobyrinate + 2 L-glutamine + 2 ATP + 2 H2O = hydrogenobyrinate a,c-diamide + 2 L-glutamate + 2 ADP + 2 phosphate + 2 H(+). The protein operates within cofactor biosynthesis; adenosylcobalamin biosynthesis; cob(II)yrinate a,c-diamide from precorrin-2 (aerobic route): step 9/10. Its function is as follows. Catalyzes the ATP-dependent amidation of the two carboxylate groups at positions a and c of hydrogenobyrinate, using either L-glutamine or ammonia as the nitrogen source. In Mycobacterium bovis (strain ATCC BAA-935 / AF2122/97), this protein is Hydrogenobyrinate a,c-diamide synthase.